The chain runs to 300 residues: Transacylase cctO (300 aa).

The chain crosses the membrane as a helical span at residues 52 to 72; sequence IVYVSLTFFVVSIGLNFILAI. 2 short sequence motifs (HXXHC) span residues 185 to 189 and 225 to 229; these read HQLGC and HVDQC. Residue Asn270 is glycosylated (N-linked (GlcNAc...) asparagine).

This sequence belongs to the ustYa family.

The protein localises to the membrane. It participates in mycotoxin biosynthesis. In terms of biological role, transacylase; part of the gene cluster that mediates the biosynthesis of the mycotoxin cyclochlorotine, a hepatotoxic and carcinogenic cyclic chlorinated pentapeptide. Within the pathway, cctO catalyzes the intramolecular O,N-transacylation from isocyclochlorotine to cyclochlorotine. The NRPS cctN initially catalyzes the condensation of L-serine (Ser), Pro, L-2-aminobutyrate (2Abu), Ser, and beta-Phe in this order to produce isocyclotine. After the dichlorination of Pro2 catalyzed by cctP2 to produce isocyclochlorotine, the cctO-mediated transacylation of isocyclochlorotine can furnish cyclochlorotine. The subsequent hydroxylation of cyclochlorotine by cctR yields hydroxycyclochlorotine as the final product. CctP1 probably acts as a phenylalanine aminomutase and provides the uncommon building block beta-Phe. Furthermore, 2Abu can be synthesized from threonine by one of the threonine dehydratases and transaminases localized outside of the cluster. The functions of the remaining proteins encoded by the cluster, cctM and cctT, have not been identified yet. The chain is Transacylase cctO from Talaromyces islandicus (Penicillium islandicum).